The following is a 183-amino-acid chain: Translation initiation factor IF-3 (183 aa).

Belongs to the IF-3 family. As to quaternary structure, monomer.

Its subcellular location is the cytoplasm. In terms of biological role, IF-3 binds to the 30S ribosomal subunit and shifts the equilibrium between 70S ribosomes and their 50S and 30S subunits in favor of the free subunits, thus enhancing the availability of 30S subunits on which protein synthesis initiation begins. The chain is Translation initiation factor IF-3 from Yersinia pseudotuberculosis serotype O:1b (strain IP 31758).